A 724-amino-acid chain; its full sequence is Membrane protein YdfJ (724 aa).

Transmembrane regions (helical) follow at residues 17-37 (IKAICAWIVVLVAAIGLAVTL), 179-199 (IVGIILAFVVLAITFGSLLIA), 200-220 (GLPILTALIGLGVSIGLVLIG), 231-251 (LSLAGMIGLAVGIDYALFIFT), 277-297 (AVVFAGLTVIVALCGLTVVNI), 309-329 (LSVLMAVLASITLVPAVLSIA), 360-380 (IMLSVCSILILIVISIPSMHL), 512-532 (AIPVFAVLIVGFAFVLLTIVF), 539-559 (LVAVAGFMLTMTATLGICVFV), 575-595 (GPILAFLPILSIGILFGLAMD), 627-647 (PVVTAAGLIMIFVFAGFIFAG), and 655-675 (GLALSFGVLFDAFIVRMTLIP).

This sequence belongs to the resistance-nodulation-cell division (RND) (TC 2.A.6) family. MmpL subfamily.

It localises to the cell membrane. In Bacillus subtilis (strain 168), this protein is Membrane protein YdfJ (ydfJ).